Here is a 141-residue protein sequence, read N- to C-terminus: Large ribosomal subunit protein uL11 (141 aa).

This sequence belongs to the universal ribosomal protein uL11 family. As to quaternary structure, part of the ribosomal stalk of the 50S ribosomal subunit. Interacts with L10 and the large rRNA to form the base of the stalk. L10 forms an elongated spine to which L12 dimers bind in a sequential fashion forming a multimeric L10(L12)X complex. One or more lysine residues are methylated.

In terms of biological role, forms part of the ribosomal stalk which helps the ribosome interact with GTP-bound translation factors. In Ruegeria sp. (strain TM1040) (Silicibacter sp.), this protein is Large ribosomal subunit protein uL11.